A 209-amino-acid polypeptide reads, in one-letter code: uncharacterized protein (209 aa).

Positions 1-17 are cleaved as a signal peptide; the sequence is MKRLVTGLLALSLFLAA. The disordered stretch occupies residues 17–105; that stretch reads ACGQDSDQQK…SNNQANNNQK (89 aa). A lipid anchor (N-palmitoyl cysteine) is attached at Cys-18. A lipid anchor (S-diacylglycerol cysteine) is attached at Cys-18. A compositionally biased stretch (basic and acidic residues) spans 23 to 70; that stretch reads DQQKDSNKEKDDKAKTEQQDEKTNDSSKDKKDKKDDSKDVNKDNKDNS. Positions 71–105 are enriched in low complexity; the sequence is ANDNQQQSNSNATNNDQNQTNNNQSSNNQANNNQK.

The protein resides in the cell membrane. This is an uncharacterized protein from Staphylococcus aureus (strain bovine RF122 / ET3-1).